A 387-amino-acid chain; its full sequence is Phosphoglycerate kinase (387 aa).

Substrate is bound by residues 21-23 (DLN), arginine 36, 59-62 (HLGR), arginine 113, and arginine 146. ATP is bound by residues lysine 197, glutamate 314, and 340-343 (GGDT).

The protein belongs to the phosphoglycerate kinase family. In terms of assembly, monomer.

Its subcellular location is the cytoplasm. The enzyme catalyses (2R)-3-phosphoglycerate + ATP = (2R)-3-phospho-glyceroyl phosphate + ADP. It functions in the pathway carbohydrate degradation; glycolysis; pyruvate from D-glyceraldehyde 3-phosphate: step 2/5. This Pseudomonas savastanoi pv. phaseolicola (strain 1448A / Race 6) (Pseudomonas syringae pv. phaseolicola (strain 1448A / Race 6)) protein is Phosphoglycerate kinase.